We begin with the raw amino-acid sequence, 691 residues long: Elongation factor G (691 aa).

Residues 10-284 (KMYRNIGIMA…AIVKYLPSPL (275 aa)) form the tr-type G domain. Residues 19–26 (AHIDAGKT), 83–87 (DTPGH), and 137–140 (NKMD) each bind GTP.

The protein belongs to the TRAFAC class translation factor GTPase superfamily. Classic translation factor GTPase family. EF-G/EF-2 subfamily.

The protein localises to the cytoplasm. Catalyzes the GTP-dependent ribosomal translocation step during translation elongation. During this step, the ribosome changes from the pre-translocational (PRE) to the post-translocational (POST) state as the newly formed A-site-bound peptidyl-tRNA and P-site-bound deacylated tRNA move to the P and E sites, respectively. Catalyzes the coordinated movement of the two tRNA molecules, the mRNA and conformational changes in the ribosome. This is Elongation factor G from Clostridium tetani (strain Massachusetts / E88).